The following is a 101-amino-acid chain: Small ribosomal subunit protein uS14 (101 aa).

This sequence belongs to the universal ribosomal protein uS14 family. In terms of assembly, part of the 30S ribosomal subunit. Contacts proteins S3 and S10.

Binds 16S rRNA, required for the assembly of 30S particles and may also be responsible for determining the conformation of the 16S rRNA at the A site. The protein is Small ribosomal subunit protein uS14 of Actinobacillus pleuropneumoniae serotype 5b (strain L20).